Consider the following 180-residue polypeptide: UPF0227 protein ECA1814 (180 aa).

It belongs to the UPF0227 family.

The polypeptide is UPF0227 protein ECA1814 (Pectobacterium atrosepticum (strain SCRI 1043 / ATCC BAA-672) (Erwinia carotovora subsp. atroseptica)).